The sequence spans 474 residues: MYAEERAYGSFDDVMEVYQQIVTESIQLKRLHFGSGCLIEFLGDSGTCETFCGGWISMICWTSDTNSMGSLTVDIGIDDGKYKTYNARGFLLCSKSITSISQNTEGRDRILTVSQENNKLQITFVTLTKVFKEHDIRNLGDPKCIEKFEKECRALDRKKHDDEHRKRSGKQKEKRKVEDTDKKKDDDRRKQEERKRNDEDKQPDKKEESDELPKEKRQKYHDMKRNLEEQSHEDGITLTSTTLVNGAVEGALPPCISIDNHEDQQHDELDKRAYAQGTNREGLSNEDNYGNFRLNKSLEQLRAKLVASSGDIVERSLLKLKECLDNVKDNLIKNECADVTGPSKCLSKTKHIEPKKQIVFSDCVRPVPVCEIKPFIDVRLFETARSPRRLRQRTRTIVGSTDGAIEQQRVISGQNRGRARGRGRGRAPRRRNSNINNSRTQTTIVIDDSSEAENFENEGSFNEDLLATTILETL.

Basic and acidic residues-rich tracts occupy residues 156 to 165 (DRKKHDDEHR) and 175 to 219 (RKVE…KRQK). 2 disordered regions span residues 156 to 219 (DRKK…KRQK) and 412 to 441 (SGQN…SRTQ). The segment covering 417-432 (GRARGRGRGRAPRRRN) has biased composition (basic residues).

It belongs to the herpesviridae U79/UL112 family.

The protein localises to the host nucleus. Functionally, may be involved in DNA replication. The chain is Protein U79/U80 (U79/U80) from Homo sapiens (Human).